A 61-amino-acid polypeptide reads, in one-letter code: Small ribosomal subunit protein uS14B (61 aa).

Zn(2+) is bound by residues C24, C27, C40, and C43.

The protein belongs to the universal ribosomal protein uS14 family. Zinc-binding uS14 subfamily. In terms of assembly, part of the 30S ribosomal subunit. Contacts proteins S3 and S10. Requires Zn(2+) as cofactor.

Its function is as follows. Binds 16S rRNA, required for the assembly of 30S particles and may also be responsible for determining the conformation of the 16S rRNA at the A site. This chain is Small ribosomal subunit protein uS14B, found in Lactococcus lactis subsp. lactis (strain IL1403) (Streptococcus lactis).